Here is a 282-residue protein sequence, read N- to C-terminus: Parvulin-like PPIase (282 aa).

Residues 1–20 form the signal peptide; sequence MKKLSVIFLSVSMLSSIAFC. Residues 138–231 form the PpiC domain; sequence KEQIKVAHIL…FGWHIIKVLE (94 aa).

Belongs to the PpiC/parvulin rotamase family.

The protein localises to the cell outer membrane. The enzyme catalyses [protein]-peptidylproline (omega=180) = [protein]-peptidylproline (omega=0). The polypeptide is Parvulin-like PPIase (plp) (Rickettsia typhi (strain ATCC VR-144 / Wilmington)).